We begin with the raw amino-acid sequence, 104 residues long: Toxin-like protein 14 (104 aa).

The signal sequence occupies residues 1 to 25; that stretch reads MNTYNARLYIFSLALALVILKGTKC.

Contains 4 disulfide bonds. As to expression, expressed by the venom gland.

It is found in the secreted. The polypeptide is Toxin-like protein 14 (Urodacus yaschenkoi (Inland robust scorpion)).